Consider the following 235-residue polypeptide: MRKKIEMSLIKSPANGVVIKRKISDGLKEIVSLKEKILLETTAKIQSIEEKREEKFIQGYYDGYTKGIIDEMDNFIPLISLLCSELEKKRINMINDLKSILLKPSEEVDVFIKIFESWVTKLPSISGPVNLHIPTSFKDKSLEVESYFVDKSIWNVHITFHDDKRFVFFTDQFIAEFSPQEFVDNCEQYLINNHCFSPDKVNEICEQARHYLVEKMFETHSLDMNNSVLASPEDL.

This is an uncharacterized protein from Escherichia coli (strain K12).